Reading from the N-terminus, the 240-residue chain is NADH-quinone oxidoreductase subunit I 2 (240 aa).

2 4Fe-4S ferredoxin-type domains span residues 57–86 and 97–126; these read TDLR…IEWH and DRFA…MGYD. [4Fe-4S] cluster-binding residues include C66, C69, C72, C76, C106, C109, C112, and C116. The disordered stretch occupies residues 185-240; that stretch reads IHGYLGRPPLPKGYEPELKPQFRKPAEEAAEAQQAEAAGQPAAEPGKTNGEEAGQP. The span at 198-211 shows a compositional bias: basic and acidic residues; sequence YEPELKPQFRKPAE. The span at 215–230 shows a compositional bias: low complexity; that stretch reads EAQQAEAAGQPAAEPG.

This sequence belongs to the complex I 23 kDa subunit family. As to quaternary structure, NDH-1 is composed of 14 different subunits. Subunits NuoA, H, J, K, L, M, N constitute the membrane sector of the complex. The cofactor is [4Fe-4S] cluster.

Its subcellular location is the cell membrane. The enzyme catalyses a quinone + NADH + 5 H(+)(in) = a quinol + NAD(+) + 4 H(+)(out). In terms of biological role, NDH-1 shuttles electrons from NADH, via FMN and iron-sulfur (Fe-S) centers, to quinones in the respiratory chain. The immediate electron acceptor for the enzyme in this species is believed to be ubiquinone. Couples the redox reaction to proton translocation (for every two electrons transferred, four hydrogen ions are translocated across the cytoplasmic membrane), and thus conserves the redox energy in a proton gradient. The protein is NADH-quinone oxidoreductase subunit I 2 of Symbiobacterium thermophilum (strain DSM 24528 / JCM 14929 / IAM 14863 / T).